We begin with the raw amino-acid sequence, 451 residues long: tRNA-2-methylthio-N(6)-dimethylallyladenosine synthase (451 aa).

Residues Met-1–Ala-116 enclose the MTTase N-terminal domain. Residues Cys-10, Cys-46, Cys-79, Cys-162, Cys-166, and Cys-169 each coordinate [4Fe-4S] cluster. Residues Ser-148 to Lys-384 form the Radical SAM core domain. The TRAM domain maps to Lys-387–Asn-451.

This sequence belongs to the methylthiotransferase family. MiaB subfamily. As to quaternary structure, monomer. It depends on [4Fe-4S] cluster as a cofactor.

It localises to the cytoplasm. It catalyses the reaction N(6)-dimethylallyladenosine(37) in tRNA + (sulfur carrier)-SH + AH2 + 2 S-adenosyl-L-methionine = 2-methylsulfanyl-N(6)-dimethylallyladenosine(37) in tRNA + (sulfur carrier)-H + 5'-deoxyadenosine + L-methionine + A + S-adenosyl-L-homocysteine + 2 H(+). Functionally, catalyzes the methylthiolation of N6-(dimethylallyl)adenosine (i(6)A), leading to the formation of 2-methylthio-N6-(dimethylallyl)adenosine (ms(2)i(6)A) at position 37 in tRNAs that read codons beginning with uridine. This chain is tRNA-2-methylthio-N(6)-dimethylallyladenosine synthase, found in Treponema denticola (strain ATCC 35405 / DSM 14222 / CIP 103919 / JCM 8153 / KCTC 15104).